The primary structure comprises 149 residues: MAHIFVYGTLKRGQPNHKVMLDHSHGLAAFRGRGCTVESFPLVIAGEHNIPWLLYLPGKGHCVTGEIYEVDEQMLRFLDDFEDCPSMYQRTALQVQVLEWEGDGDPGDSVQCFVYTTATYAPEWLFLPYHESYDSEGPHGLRYNPRENR.

7-10 provides a ligand contact to substrate; that stretch reads YGTL. The active-site Proton acceptor is E82.

The protein belongs to the gamma-glutamylcyclotransferase family. In terms of assembly, monomer.

It catalyses the reaction epsilon-(gamma-L-glutamyl)-L-lysine = 5-oxo-L-proline + L-lysine. Functionally, contributes to degradation of proteins cross-linked by transglutaminases by degrading the cross-link between a lysine and a glutamic acid residue. Catalyzes the formation of 5-oxo-L-proline from L-gamma-glutamyl-L-epsilon-lysine. Inactive with L-gamma-glutamyl-alpha-amino acid substrates such as L-gamma-glutamyl-L-alpha-cysteine and L-gamma-glutamyl-L-alpha-alanine. The protein is Gamma-glutamylaminecyclotransferase (Ggact) of Mus musculus (Mouse).